The chain runs to 175 residues: Large ribosomal subunit protein uL10 (175 aa).

Belongs to the universal ribosomal protein uL10 family. In terms of assembly, part of the ribosomal stalk of the 50S ribosomal subunit. The N-terminus interacts with L11 and the large rRNA to form the base of the stalk. The C-terminus forms an elongated spine to which L12 dimers bind in a sequential fashion forming a multimeric L10(L12)X complex.

Functionally, forms part of the ribosomal stalk, playing a central role in the interaction of the ribosome with GTP-bound translation factors. The chain is Large ribosomal subunit protein uL10 from Prochlorococcus marinus (strain NATL2A).